We begin with the raw amino-acid sequence, 427 residues long: 3-isopropylmalate dehydratase large subunit (427 aa).

[4Fe-4S] cluster-binding residues include Cys308, Cys368, and Cys371.

This sequence belongs to the aconitase/IPM isomerase family. LeuC type 2 subfamily. In terms of assembly, heterodimer of LeuC and LeuD. [4Fe-4S] cluster is required as a cofactor.

It carries out the reaction (2R,3S)-3-isopropylmalate = (2S)-2-isopropylmalate. The protein operates within amino-acid biosynthesis; L-leucine biosynthesis; L-leucine from 3-methyl-2-oxobutanoate: step 2/4. Its function is as follows. Catalyzes the isomerization between 2-isopropylmalate and 3-isopropylmalate, via the formation of 2-isopropylmaleate. This is 3-isopropylmalate dehydratase large subunit from Geotalea uraniireducens (strain Rf4) (Geobacter uraniireducens).